We begin with the raw amino-acid sequence, 393 residues long: Erythronate-4-phosphate dehydrogenase (393 aa).

Positions 57 and 79 each coordinate substrate. Residue Asp159 participates in NAD(+) binding. Residue Arg229 is part of the active site. Position 253 (Asp253) interacts with NAD(+). The active site involves Glu258. The active-site Proton donor is the His275. Gly278 provides a ligand contact to NAD(+). Tyr279 is a binding site for substrate.

This sequence belongs to the D-isomer specific 2-hydroxyacid dehydrogenase family. PdxB subfamily. In terms of assembly, homodimer.

It localises to the cytoplasm. It carries out the reaction 4-phospho-D-erythronate + NAD(+) = (R)-3-hydroxy-2-oxo-4-phosphooxybutanoate + NADH + H(+). It participates in cofactor biosynthesis; pyridoxine 5'-phosphate biosynthesis; pyridoxine 5'-phosphate from D-erythrose 4-phosphate: step 2/5. Its function is as follows. Catalyzes the oxidation of erythronate-4-phosphate to 3-hydroxy-2-oxo-4-phosphonooxybutanoate. This is Erythronate-4-phosphate dehydrogenase from Colwellia psychrerythraea (strain 34H / ATCC BAA-681) (Vibrio psychroerythus).